The chain runs to 120 residues: uncharacterized protein (120 aa).

The segment at 90–120 (SLASRGGHMTQSGQCHVSGSLLGRGHKSRGR) is disordered.

This is an uncharacterized protein from Homo sapiens (Human).